The chain runs to 276 residues: Urease accessory protein UreD (276 aa).

This sequence belongs to the UreD family. As to quaternary structure, ureD, UreF and UreG form a complex that acts as a GTP-hydrolysis-dependent molecular chaperone, activating the urease apoprotein by helping to assemble the nickel containing metallocenter of UreC. The UreE protein probably delivers the nickel.

The protein resides in the cytoplasm. Functionally, required for maturation of urease via the functional incorporation of the urease nickel metallocenter. This chain is Urease accessory protein UreD, found in Paracidovorax citrulli (strain AAC00-1) (Acidovorax citrulli).